The following is a 490-amino-acid chain: Adenylosuccinate synthetase 1, chloroplastic (490 aa).

Residues 1-47 (MSLSTLSHPAAAAAAATGSGKSHFRTAPAAQSVRFPKARPPVPAAVS) constitute a chloroplast transit peptide. The disordered stretch occupies residues 14-36 (AAATGSGKSHFRTAPAAQSVRFP). GTP is bound by residues 77 to 83 (GDEGKGK) and 105 to 107 (GHT). D78 serves as the catalytic Proton acceptor. Residues D78 and G105 each contribute to the Mg(2+) site. IMP is bound by residues 78–81 (DEGK), 103–106 (NAGH), T195, R209, Q289, T304, and R368. H106 serves as the catalytic Proton donor. Substrate is bound at residue 364–370 (TTTGRPR). Residues R370, 396 to 398 (KLD), and 479 to 481 (GVG) each bind GTP.

The protein belongs to the adenylosuccinate synthetase family. Homodimer. The cofactor is Mg(2+).

It is found in the plastid. Its subcellular location is the chloroplast. It catalyses the reaction IMP + L-aspartate + GTP = N(6)-(1,2-dicarboxyethyl)-AMP + GDP + phosphate + 2 H(+). Its pathway is purine metabolism; AMP biosynthesis via de novo pathway; AMP from IMP: step 1/2. Plays an important role in the de novo pathway and in the salvage pathway of purine nucleotide biosynthesis. Catalyzes the first committed step in the biosynthesis of AMP from IMP. The protein is Adenylosuccinate synthetase 1, chloroplastic of Sorghum bicolor (Sorghum).